The primary structure comprises 406 residues: Tyrosine--tRNA ligase (406 aa).

Y35 lines the L-tyrosine pocket. The 'HIGH' region signature appears at 40-49 (PTADSLHVGH). L-tyrosine-binding residues include Y168 and Q172. The 'KMSKS' region motif lies at 228 to 232 (KMGKT). Residue K231 coordinates ATP. Positions 340–404 (SELLDILVEA…RGKKNYNKIV (65 aa)) constitute an S4 RNA-binding domain.

The protein belongs to the class-I aminoacyl-tRNA synthetase family. TyrS type 1 subfamily. In terms of assembly, homodimer.

It localises to the cytoplasm. It carries out the reaction tRNA(Tyr) + L-tyrosine + ATP = L-tyrosyl-tRNA(Tyr) + AMP + diphosphate + H(+). Functionally, catalyzes the attachment of tyrosine to tRNA(Tyr) in a two-step reaction: tyrosine is first activated by ATP to form Tyr-AMP and then transferred to the acceptor end of tRNA(Tyr). The protein is Tyrosine--tRNA ligase of Clostridium perfringens (strain ATCC 13124 / DSM 756 / JCM 1290 / NCIMB 6125 / NCTC 8237 / Type A).